Here is a 146-residue protein sequence, read N- to C-terminus: Large ribosomal subunit protein uL11 (146 aa).

It belongs to the universal ribosomal protein uL11 family. Part of the ribosomal stalk of the 50S ribosomal subunit. Interacts with L10 and the large rRNA to form the base of the stalk. L10 forms an elongated spine to which L12 dimers bind in a sequential fashion forming a multimeric L10(L12)X complex. One or more lysine residues are methylated.

In terms of biological role, forms part of the ribosomal stalk which helps the ribosome interact with GTP-bound translation factors. This Blochmanniella floridana protein is Large ribosomal subunit protein uL11.